A 157-amino-acid chain; its full sequence is Nuclear cap-binding protein subunit 2 (157 aa).

Residues Tyr17, Tyr40, 109-113, 120-124, and 130-131 each bind mRNA; these read RADWD, RQYGR, and QV. Residues 37–115 form the RRM domain; sequence CTLYVGNLSY…RVIRADWDAG (79 aa).

It belongs to the RRM NCBP2 family. As to quaternary structure, component of the nuclear cap-binding complex (CBC), a heterodimer composed of ncbp-1 and ncbp-2 that interacts with m7GpppG-capped RNA.

It is found in the nucleus. In terms of biological role, component of the cap-binding complex (CBC), which binds co-transcriptionally to the 5' cap of pre-mRNAs and is involved in various processes such as pre-mRNA splicing and RNA-mediated gene silencing (RNAi). The CBC complex is involved in miRNA-mediated RNA interference and is required for primary microRNAs (miRNAs) processing. In the CBC complex, ncbp-2 recognizes and binds capped RNAs (m7GpppG-capped RNA) but requires ncbp-1 to stabilize the movement of its N-terminal loop and lock the CBC into a high affinity cap-binding state with the cap structure. This chain is Nuclear cap-binding protein subunit 2 (ncbp-2), found in Caenorhabditis briggsae.